The chain runs to 316 residues: UDP-N-acetylenolpyruvoylglucosamine reductase (316 aa).

One can recognise an FAD-binding PCMH-type domain in the interval 27 to 225; sequence VGGKAERFYR…KTAINALLKK (199 aa). The active site involves Arg190. Ser239 (proton donor) is an active-site residue. Glu309 is a catalytic residue.

This sequence belongs to the MurB family. FAD is required as a cofactor.

It is found in the cytoplasm. It catalyses the reaction UDP-N-acetyl-alpha-D-muramate + NADP(+) = UDP-N-acetyl-3-O-(1-carboxyvinyl)-alpha-D-glucosamine + NADPH + H(+). Its pathway is cell wall biogenesis; peptidoglycan biosynthesis. Functionally, cell wall formation. This Coxiella burnetii (strain CbuK_Q154) (Coxiella burnetii (strain Q154)) protein is UDP-N-acetylenolpyruvoylglucosamine reductase.